We begin with the raw amino-acid sequence, 197 residues long: Nucleoid occlusion factor SlmA (197 aa).

One can recognise an HTH tetR-type domain in the interval 7–67 (INRREHILQC…GLIEFIEDAI (61 aa)). The H-T-H motif DNA-binding region spans 30-49 (TTAKLAAEVGVSEAALYRHF).

The protein belongs to the nucleoid occlusion factor SlmA family. In terms of assembly, homodimer. Interacts with FtsZ.

It is found in the cytoplasm. Its subcellular location is the nucleoid. Functionally, required for nucleoid occlusion (NO) phenomenon, which prevents Z-ring formation and cell division over the nucleoid. Acts as a DNA-associated cell division inhibitor that binds simultaneously chromosomal DNA and FtsZ, and disrupts the assembly of FtsZ polymers. SlmA-DNA-binding sequences (SBS) are dispersed on non-Ter regions of the chromosome, preventing FtsZ polymerization at these regions. The polypeptide is Nucleoid occlusion factor SlmA (Shewanella denitrificans (strain OS217 / ATCC BAA-1090 / DSM 15013)).